Reading from the N-terminus, the 152-residue chain is Deoxyuridine 5'-triphosphate nucleotidohydrolase (152 aa).

Residues 71-73, asparagine 84, 88-90, and methionine 98 each bind substrate; these read RSG and LID.

This sequence belongs to the dUTPase family. It depends on Mg(2+) as a cofactor.

It carries out the reaction dUTP + H2O = dUMP + diphosphate + H(+). It participates in pyrimidine metabolism; dUMP biosynthesis; dUMP from dCTP (dUTP route): step 2/2. This enzyme is involved in nucleotide metabolism: it produces dUMP, the immediate precursor of thymidine nucleotides and it decreases the intracellular concentration of dUTP so that uracil cannot be incorporated into DNA. In Klebsiella pneumoniae subsp. pneumoniae (strain ATCC 700721 / MGH 78578), this protein is Deoxyuridine 5'-triphosphate nucleotidohydrolase.